A 467-amino-acid chain; its full sequence is GTPase Der (467 aa).

2 EngA-type G domains span residues 25 to 188 and 199 to 372; these read PVVA…PEAP and RRVA…ASWE. GTP-binding positions include 31-38, 78-82, 140-143, 205-212, 252-256, and 317-320; these read GRPNVGKS, DTGGW, NKAD, DTAGL, and NKWD. Positions 373–455 constitute a KH-like domain; sequence TRVPTAQLNA…PIEIAVRPRK (83 aa).

The protein belongs to the TRAFAC class TrmE-Era-EngA-EngB-Septin-like GTPase superfamily. EngA (Der) GTPase family. In terms of assembly, associates with the 50S ribosomal subunit.

GTPase that plays an essential role in the late steps of ribosome biogenesis. The polypeptide is GTPase Der (Salinispora arenicola (strain CNS-205)).